The primary structure comprises 566 residues: Mitochondrial distribution and morphology protein 34 (566 aa).

Residues 1–195 (MAFNFNWSPL…LPAIIHRLSL (195 aa)) form the SMP-LTD domain. Disordered regions lie at residues 212–237 (PEQT…DSLG), 349–401 (GYGL…NPSV), 432–518 (PERR…SSST), and 539–566 (KLMP…AYGQ). Basic residues predominate over residues 358-370 (RHSKAHSRKRKKR). Polar residues predominate over residues 380–401 (TSDTASVSDESAYTETASNPSV). A compositionally biased stretch (basic and acidic residues) spans 444-454 (PRRDIATEMLR).

This sequence belongs to the MDM34 family. As to quaternary structure, component of the ER-mitochondria encounter structure (ERMES) or MDM complex, composed of mmm1, mdm10, mdm12 and mdm34.

The protein resides in the mitochondrion outer membrane. Its function is as follows. Component of the ERMES/MDM complex, which serves as a molecular tether to connect the endoplasmic reticulum (ER) and mitochondria. Components of this complex are involved in the control of mitochondrial shape and protein biogenesis, and function in nonvesicular lipid trafficking between the ER and mitochondria. Mdm34 is required for the interaction of the ER-resident membrane protein mmm1 and the outer mitochondrial membrane-resident beta-barrel protein mdm10. This chain is Mitochondrial distribution and morphology protein 34, found in Aspergillus flavus (strain ATCC 200026 / FGSC A1120 / IAM 13836 / NRRL 3357 / JCM 12722 / SRRC 167).